The primary structure comprises 307 residues: Protease HtpX homolog (307 aa).

2 consecutive transmembrane segments (helical) span residues 7–27 (AILLAGLTGLFMGVGYLIGGA) and 28–48 (SGATIALVVAAATNLFAYWNS). Histidine 130 provides a ligand contact to Zn(2+). Glutamate 131 is an active-site residue. Histidine 134 contacts Zn(2+). Transmembrane regions (helical) follow at residues 145 to 165 (ITATIAGAISMLAQFGMFFGG) and 171 to 191 (GPGIIGSLAMMILAPFGAMLV). Glutamate 200 is a Zn(2+) binding site. The tract at residues 277–307 (AGQSGGGLAPGGPPPDPSSPWNKGSRRGPWG) is disordered.

The protein belongs to the peptidase M48B family. The cofactor is Zn(2+).

It is found in the cell inner membrane. The chain is Protease HtpX homolog from Nitrobacter winogradskyi (strain ATCC 25391 / DSM 10237 / CIP 104748 / NCIMB 11846 / Nb-255).